Reading from the N-terminus, the 535-residue chain is Dimethylaniline monooxygenase [N-oxide-forming] 2 (535 aa).

N-acetylalanine is present on Ala-2. FAD contacts are provided by residues 9–13, Glu-32, 40–41, and 61–62; these read GAGVS, VW, and NT. NADP(+)-binding positions include 60–61 and 195–198; these read TN and SGSD. Lys-492 participates in a covalent cross-link: Glycyl lysine isopeptide (Lys-Gly) (interchain with G-Cter in SUMO). Residues 510 to 530 form a helical membrane-spanning segment; it reads FPVSFLLKILGLVAVVVAFFC.

The protein belongs to the FMO family. The cofactor is FAD. It depends on Mg(2+) as a cofactor.

It is found in the microsome membrane. It localises to the endoplasmic reticulum membrane. It carries out the reaction N,N-dimethylaniline + NADPH + O2 + H(+) = N,N-dimethylaniline N-oxide + NADP(+) + H2O. Catalyzes the oxidative metabolism of numerous xenobiotics, including mainly therapeutic drugs and insecticides that contain a soft nucleophile, most commonly nitrogen and sulfur and participates to their bioactivation. In Macaca mulatta (Rhesus macaque), this protein is Dimethylaniline monooxygenase [N-oxide-forming] 2.